Reading from the N-terminus, the 360-residue chain is Peptide chain release factor 1 (360 aa).

Gln236 is subject to N5-methylglutamine.

Belongs to the prokaryotic/mitochondrial release factor family. Methylated by PrmC. Methylation increases the termination efficiency of RF1.

The protein localises to the cytoplasm. Functionally, peptide chain release factor 1 directs the termination of translation in response to the peptide chain termination codons UAG and UAA. This chain is Peptide chain release factor 1, found in Methylococcus capsulatus (strain ATCC 33009 / NCIMB 11132 / Bath).